Consider the following 394-residue polypeptide: Carbamoyl phosphate synthase small chain (394 aa).

Residues M1–R188 form a CPSase region. L-glutamine-binding residues include S49, G240, and G242. In terms of domain architecture, Glutamine amidotransferase type-1 spans R192 to G379. C267 acts as the Nucleophile in catalysis. Residues L268, Q271, N309, G311, and Y312 each coordinate L-glutamine. Residues H352 and E354 contribute to the active site.

This sequence belongs to the CarA family. In terms of assembly, composed of two chains; the small (or glutamine) chain promotes the hydrolysis of glutamine to ammonia, which is used by the large (or ammonia) chain to synthesize carbamoyl phosphate. Tetramer of heterodimers (alpha,beta)4.

The enzyme catalyses hydrogencarbonate + L-glutamine + 2 ATP + H2O = carbamoyl phosphate + L-glutamate + 2 ADP + phosphate + 2 H(+). The catalysed reaction is L-glutamine + H2O = L-glutamate + NH4(+). It functions in the pathway amino-acid biosynthesis; L-arginine biosynthesis; carbamoyl phosphate from bicarbonate: step 1/1. Its pathway is pyrimidine metabolism; UMP biosynthesis via de novo pathway; (S)-dihydroorotate from bicarbonate: step 1/3. In terms of biological role, small subunit of the glutamine-dependent carbamoyl phosphate synthetase (CPSase). CPSase catalyzes the formation of carbamoyl phosphate from the ammonia moiety of glutamine, carbonate, and phosphate donated by ATP, constituting the first step of 2 biosynthetic pathways, one leading to arginine and/or urea and the other to pyrimidine nucleotides. The small subunit (glutamine amidotransferase) binds and cleaves glutamine to supply the large subunit with the substrate ammonia. The sequence is that of Carbamoyl phosphate synthase small chain from Deinococcus radiodurans (strain ATCC 13939 / DSM 20539 / JCM 16871 / CCUG 27074 / LMG 4051 / NBRC 15346 / NCIMB 9279 / VKM B-1422 / R1).